Here is a 42-residue protein sequence, read N- to C-terminus: Cytochrome b6-f complex subunit 7 (42 aa).

A helical transmembrane segment spans residues 15-35; the sequence is IVTAAVTCIFMVLFGLSLGFA.

The protein belongs to the PetM family. In terms of assembly, the 4 large subunits of the cytochrome b6-f complex are cytochrome b6, subunit IV (17 kDa polypeptide, PetD), cytochrome f and the Rieske protein, while the 4 small subunits are PetG, PetL, PetM and PetN. The complex functions as a dimer.

The protein resides in the plastid. It localises to the chloroplast thylakoid membrane. Its function is as follows. Component of the cytochrome b6-f complex, which mediates electron transfer between photosystem II (PSII) and photosystem I (PSI), cyclic electron flow around PSI, and state transitions. This Trieres chinensis (Marine centric diatom) protein is Cytochrome b6-f complex subunit 7.